Consider the following 434-residue polypeptide: MFS-type transporter AFUA_1G00970 (434 aa).

12 helical membrane-spanning segments follow: residues 21–41, 60–80, 87–107, 112–132, 145–165, 182–202, 240–260, 278–298, 301–321, 327–347, 364–384, and 393–413; these read VIGG…FGVF, WIGS…GVLV, VLLI…SLCS, IFLA…WPPF, LALG…SIMI, VLGF…TEPP, VFIS…NPFF, YMIS…GIVA, VGHY…SFCW, LTGL…ILSL, AIGF…PIGG, and LSLS…MGYA. Positions 201–225 are disordered; sequence PPKQSQPQPRPALEATVEGGSASPT.

Belongs to the major facilitator superfamily. Monocarboxylate porter (TC 2.A.1.13) family.

The protein resides in the cell membrane. Its function is as follows. MFS-type transporter; part of the gene cluster that mediates the biosynthesis of fumigermin that inhibits germination of spores of the inducing S.rapamycinicus, and thus helps the fungus to defend resources in the shared habitat against a bacterial competitor. May be involved in the secretion of fumigermin. The sequence is that of MFS-type transporter AFUA_1G00970 from Aspergillus fumigatus (strain ATCC MYA-4609 / CBS 101355 / FGSC A1100 / Af293) (Neosartorya fumigata).